Consider the following 735-residue polypeptide: Transcription factor RFX4 (735 aa).

The interval 25–59 (SESKRFSSHSSIGNISNDENEEKENNRASKPHSTP) is disordered. The DNA-binding element occupies 44 to 126 (NEEKENNRAS…RRLGTRGQSK (83 aa)). A DNA-binding region (RFX-type winged-helix) is located at residues 61-136 (TLQWLEENYE…YHYYGIAVKE (76 aa)). The tract at residues 315–487 (RFSQILKRQT…NELMRAMKGE (173 aa)) is necessary for dimerization.

It belongs to the RFX family.

It localises to the nucleus. May activate transcription by interacting directly with the X-box. This chain is Transcription factor RFX4 (rfx4), found in Danio rerio (Zebrafish).